Consider the following 979-residue polypeptide: Protocadherin alpha-9 (979 aa).

The N-terminal stretch at 1 to 59 (MRLGNRPEDIRTCVHLRWHIHGLLRQENASVVISKCLRHGAWRLLLWLLLLATWDVGSG) is a signal peptide. The Extracellular portion of the chain corresponds to 60–726 (QLHYSVPEEA…RREASLMDVN (667 aa)). Cadherin domains lie at 64–163 (SVPE…PPIF), 164–272 (SVAE…APVF), 273–380 (DRSV…APEI), 381–485 (VLTS…APAF), 486–595 (AHPE…PPTL), and 611–707 (VSRS…VPKA). 2 N-linked (GlcNAc...) asparagine glycosylation sites follow: asparagine 287 and asparagine 295. A glycan (N-linked (GlcNAc...) asparagine) is linked at asparagine 578. The helical transmembrane segment at 727–747 (VYLIIAICAVSSLLVLTLLLY) threads the bilayer. Residues 748–979 (TALRCSAVPM…GNSTTDNSDQ (232 aa)) lie on the Cytoplasmic side of the membrane. PXXP repeat units follow at residues 763-766 (LGKP), 828-831 (PRQP), 861-864 (PGGP), 902-905 (PGNP), and 920-923 (PGSP). The tract at residues 763–923 (LGKPTLVCSS…PDKFIIPGSP (161 aa)) is 5 X 4 AA repeats of P-X-X-P. Positions 859–979 (AGPGGPDQQW…GNSTTDNSDQ (121 aa)) are disordered. The span at 938-952 (DKSDFITFGKKEETK) shows a compositional bias: basic and acidic residues.

It localises to the cell membrane. Functionally, potential calcium-dependent cell-adhesion protein. May be involved in the establishment and maintenance of specific neuronal connections in the brain. The chain is Protocadherin alpha-9 from Mus musculus (Mouse).